The following is a 316-amino-acid chain: Ribosomal RNA small subunit methyltransferase H (316 aa).

Residues 35–37 (GGH), Asp55, Phe79, Asp101, and Gln108 contribute to the S-adenosyl-L-methionine site.

This sequence belongs to the methyltransferase superfamily. RsmH family.

The protein resides in the cytoplasm. The enzyme catalyses cytidine(1402) in 16S rRNA + S-adenosyl-L-methionine = N(4)-methylcytidine(1402) in 16S rRNA + S-adenosyl-L-homocysteine + H(+). Its function is as follows. Specifically methylates the N4 position of cytidine in position 1402 (C1402) of 16S rRNA. In Aliivibrio fischeri (strain MJ11) (Vibrio fischeri), this protein is Ribosomal RNA small subunit methyltransferase H.